We begin with the raw amino-acid sequence, 272 residues long: Probable feruloyl esterase C (272 aa).

Residues 1 to 22 form the signal peptide; sequence MVPTMIYSAILALSAFTPSVLA.

This sequence belongs to the faeC family.

It localises to the secreted. It catalyses the reaction feruloyl-polysaccharide + H2O = ferulate + polysaccharide.. Functionally, involved in degradation of plant cell walls. Hydrolyzes the feruloyl-arabinose ester bond in arabinoxylans, and the feruloyl-galactose ester bond in pectin. Active against paranitrophenyl-acetate, methyl ferulate and wheat arabinoxylan. In Neosartorya fischeri (strain ATCC 1020 / DSM 3700 / CBS 544.65 / FGSC A1164 / JCM 1740 / NRRL 181 / WB 181) (Aspergillus fischerianus), this protein is Probable feruloyl esterase C (faeC).